The primary structure comprises 267 residues: MELERIVSSALFAFVQTHLPEADLSGLDEVIFSYVLGVLEDLGPSGPSEENFDMEAFIEMMEAYVPGFAHIHRGIIEDMVQTLSVQLSSARNKETLRRPEKLKEESRPPAATGNTQDEAAAAEEEQPGVDVLLEVFPTCSMEQAQWVLAKARGNLEEAVQMLIEGKEEGPPGWGGPNQDLPRRLRGPRKEELKSFILQKYMMVDRAEDQKTHRPMAPKEAPKKLIRYIDNQVVSTKGERFKDVRNPETEEMKATYINLKPARKYRFH.

The interval 90–125 is disordered; the sequence is ARNKETLRRPEKLKEESRPPAATGNTQDEAAAAEEE. Positions 91–107 are enriched in basic and acidic residues; sequence RNKETLRRPEKLKEESR. Residues 124 to 167 enclose the CUE domain; that stretch reads EEQPGVDVLLEVFPTCSMEQAQWVLAKARGNLEEAVQMLIEGKE.

Belongs to the CUEDC2 family. In terms of assembly, interacts with PGR and ESR1.

The protein resides in the cytoplasm. The protein localises to the nucleus. Its function is as follows. Controls PGR and ESR1 protein levels through their targeting for ubiquitination and subsequent proteasomal degradation. The sequence is that of CUE domain-containing protein 2 (Cuedc2) from Rattus norvegicus (Rat).